A 518-amino-acid polypeptide reads, in one-letter code: Cytochrome P450 CYP72A219 (518 aa).

The helical transmembrane segment at 2-22 (ELVLKLISSFCAIVVVILLGW) threads the bilayer. Cys-465 serves as a coordination point for heme.

The protein belongs to the cytochrome P450 family. It depends on heme as a cofactor.

The protein resides in the membrane. Probable heme-thiolate monooxygenase. The protein is Cytochrome P450 CYP72A219 of Panax ginseng (Korean ginseng).